The chain runs to 75 residues: Small integral membrane protein 7 (75 aa).

An N-terminal signal peptide occupies residues 1-17 (MIGDILLFGTLLMNAGA). Topologically, residues 18–53 (VLNFKLKKKDTQGFGEESKEPSTGDNIREFLLSLRY) are extracellular. The chain crosses the membrane as a helical span at residues 54 to 74 (FRIFIALWNVFMMLCMIVLFG). Residue serine 75 is a topological domain, cytoplasmic.

It belongs to the SMIM7 family.

The protein localises to the membrane. The chain is Small integral membrane protein 7 (Smim7) from Mus musculus (Mouse).